An 89-amino-acid polypeptide reads, in one-letter code: Large ribosomal subunit protein bL27 (89 aa).

The disordered stretch occupies residues 1-21 (MAHKKAGGSSRNGRDSAGRRL).

It belongs to the bacterial ribosomal protein bL27 family.

This is Large ribosomal subunit protein bL27 from Roseobacter denitrificans (strain ATCC 33942 / OCh 114) (Erythrobacter sp. (strain OCh 114)).